The primary structure comprises 1129 residues: Egg-laying defective protein 27 (1129 aa).

Residues 1 to 11 show a composition bias toward polar residues; that stretch reads MSRFDSQCSSE. The tract at residues 1–43 is disordered; the sequence is MSRFDSQCSSEDVNKEDECVPSSSEDSQDGVSSPMENDDEPEF. Positions 22–33 are enriched in low complexity; the sequence is SSSEDSQDGVSS. In terms of domain architecture, BAH spans 87–223; it reads TLYRLRDSVF…QDSTKLASTH (137 aa). The ELM2 domain maps to 224 to 327; that stretch reads YAIRVGTSFQ…DALSELNAND (104 aa). One can recognise an SANT domain in the interval 332 to 384; the sequence is TDVDNMTQDDAKKFAKGIKQLGKNFSRIHRELLPHHSREQLVSYYYLWKKTPE. Residues 388-434 form a disordered region; it reads PKQAARRVNPTSIKRPTKEKVKASRPTSTEYLDFDSASESDVENNGP. Residues 419–429 show a composition bias toward acidic residues; it reads LDFDSASESDV. The GATA-type; atypical zinc-finger motif lies at 439-485; the sequence is CHHCYGAESKDWHHANGLLLCTDCRLHYKKYGQLRQIANRPSQVPAC. 5 disordered regions span residues 488-636, 693-717, 790-814, 899-950, and 982-1040; these read KRSN…DPMP, RDET…SPED, QQNQ…QQAQ, MIAE…HAAA, and MAAQ…REHA. 2 stretches are compositionally biased toward polar residues: residues 525–545 and 561–573; these read PSTV…TKKL and VINN…SSEE. Acidic residues-rich tracts occupy residues 613 to 634 and 705 to 717; these read SYDD…DDDP and KDDE…SPED. The span at 899-914 shows a compositional bias: low complexity; it reads MIAEQQQQQRHAAAQQ. Over residues 915–932 the composition is skewed to basic and acidic residues; it reads LREREQREQRERERERQH. Composition is skewed to low complexity over residues 933-950 and 983-999; these read QQQA…HAAA and AAQQ…AQAQ. The segment covering 1000–1040 has biased composition (basic and acidic residues); that stretch reads RDQERERREREAREREAAREREREQAAREAAARDQAAREHA.

In terms of assembly, interacts with ceh-6, sem-4 and sox-2. Interacts with wdr-5.1. As to expression, expression detected in anterior intestine and head region.

It localises to the nucleus. In terms of biological role, transcription factor which promotes stress survival and delays aging. Required for cell cycle progression and development of the mesodermal and endodermal embryonic lineages. Required for normal T-cell polarity, for correct migration of QL neuroblast descendants and other cells, for embryonic patterning and for the embryonic expression of hlh-8. Also required for the transdifferentiation of the Y rectal epithelial cell to the PDA motor neuron during larval development. The polypeptide is Egg-laying defective protein 27 (Caenorhabditis elegans).